The sequence spans 166 residues: Urease accessory protein UreE (166 aa).

The protein belongs to the UreE family.

The protein localises to the cytoplasm. Its function is as follows. Involved in urease metallocenter assembly. Binds nickel. Probably functions as a nickel donor during metallocenter assembly. The protein is Urease accessory protein UreE of Pseudomonas fluorescens (strain Pf0-1).